A 560-amino-acid polypeptide reads, in one-letter code: Chaperonin GroEL 2 (560 aa).

Residues 29-32 (TIGP), 86-90 (DGTTT), glycine 413, and aspartate 492 each bind ATP. A disordered region spans residues 520 to 542 (DKPEPPSAPGAEGGDPMGGMGGM). Positions 530–542 (AEGGDPMGGMGGM) are enriched in gly residues.

It belongs to the chaperonin (HSP60) family. Forms a cylinder of 14 subunits composed of two heptameric rings stacked back-to-back. Interacts with the co-chaperonin GroES.

The protein localises to the cytoplasm. The catalysed reaction is ATP + H2O + a folded polypeptide = ADP + phosphate + an unfolded polypeptide.. Its function is as follows. Together with its co-chaperonin GroES, plays an essential role in assisting protein folding. The GroEL-GroES system forms a nano-cage that allows encapsulation of the non-native substrate proteins and provides a physical environment optimized to promote and accelerate protein folding. The polypeptide is Chaperonin GroEL 2 (Prochlorococcus marinus (strain NATL2A)).